The sequence spans 103 residues: Large ribosomal subunit protein P2 (103 aa).

The segment at leucine 64–phenylalanine 103 is disordered. The segment covering lysine 90–phenylalanine 103 has biased composition (acidic residues).

The protein belongs to the eukaryotic ribosomal protein P1/P2 family. As to quaternary structure, component of the large ribosomal subunit.

The protein localises to the cytoplasm. Functionally, plays an important role in the elongation step of protein synthesis. In Encephalitozoon cuniculi (strain GB-M1) (Microsporidian parasite), this protein is Large ribosomal subunit protein P2 (RPP2A).